Reading from the N-terminus, the 672-residue chain is Spermatid perinuclear RNA-binding protein (672 aa).

A DZF domain is found at 5 to 362 (RSFANDDRHV…ALKRPFEDGV (358 aa)). Residues 348 to 370 (GTGSSALKRPFEDGVGDDKDPNK) form a disordered region. Residues 356 to 370 (RPFEDGVGDDKDPNK) are compositionally biased toward basic and acidic residues. A DRBM 1 domain is found at 386–452 (DLMNALMRLN…AVKVLQAMGY (67 aa)). The tract at residues 463-494 (VSSDEKSDNEGKNETVSSISSNNTGNSTADTS) is disordered. The span at 465 to 475 (SDEKSDNEGKN) shows a compositional bias: basic and acidic residues. Low complexity predominate over residues 477 to 490 (TVSSISSNNTGNST). In terms of domain architecture, DRBM 2 spans 509–575 (SGKNPVMELN…ALAALEKLFS (67 aa)).

The protein localises to the cytoplasm. May be involved in normal spermatogenesis and sperm function. Binds to double-stranded DNA and RNA. The sequence is that of Spermatid perinuclear RNA-binding protein (STRBP) from Gallus gallus (Chicken).